We begin with the raw amino-acid sequence, 233 residues long: MLSRVSVFKPASRGFSVLSSLKITEHTSAKHTEKPEHAPKCQNLSDAQAAFLDRVIRVDQAGELGADYIYAGQYFVLAHRYPHLKPVLKHIWDQEIHHHNTFNNLQLKRRVRPSLLTPLWKAGAFAMGAGTALISPEAAMACTEAVETVIGGHYNGQLRNLANQFNLERTDGTKGPSEEIKSLTSTIQQFRDDELEHLDTAIKHDSYMAVPYTVITEGIKTICRVAIWSAERI.

The N-terminal 15 residues, 1 to 15, are a transit peptide targeting the mitochondrion; the sequence is MLSRVSVFKPASRGF. 2 positions are modified to phosphoserine: serine 20 and serine 28. Position 32 is a phosphothreonine (threonine 32). Positions 63, 95, 98, 147, 194, and 197 each coordinate Fe cation.

Belongs to the COQ7 family. In terms of assembly, component of a multi-subunit COQ enzyme complex, composed of at least COQ3, COQ4, COQ5, COQ6, COQ7 and COQ9. Fe cation serves as cofactor. Post-translationally, phosphorylated. Dephosphorylated by PTC7; dephosphorylation is essential for enzyme activation.

It localises to the mitochondrion inner membrane. The enzyme catalyses a 5-methoxy-2-methyl-3-(all-trans-polyprenyl)benzene-1,4-diol + AH2 + O2 = a 3-demethylubiquinol + A + H2O. The catalysed reaction is a 5-methoxy-2-methyl-3-(all-trans-polyprenyl)benzoquinone + NADH + O2 = a 3-demethylubiquinone + NAD(+) + H2O. It functions in the pathway cofactor biosynthesis; ubiquinone biosynthesis. Its activity is regulated as follows. Dephosphorylation by PTC7 leads to activation. Catalyzes the hydroxylation of 2-hexaprenyl-3-methyl-6-methoxy-1,4-benzoquinol (DMQH2) during ubiquinone biosynthesis. Also catalyzes the hydroxylation of the 5-methoxy-2-methyl-3-(all-trans-polyprenyl)benzoquinone at the C6 position and participates in the biosynthesis of ubiquinone. Also has a structural role in the COQ enzyme complex, stabilizing COQ3 and COQ4 polypeptides. The chain is 5-demethoxyubiquinone hydroxylase, mitochondrial from Saccharomyces cerevisiae (strain ATCC 204508 / S288c) (Baker's yeast).